The primary structure comprises 305 residues: Peroxidase A2 (305 aa).

Q1 is subject to Pyrrolidone carboxylic acid. Residues N3 and N13 are each glycosylated (N-linked (GlcNAc...) asparagine). 4 disulfides stabilise this stretch: C11–C91, C44–C49, C97–C299, and C176–C208. H42 serves as the catalytic Proton acceptor. D43, V46, G48, D50, and S52 together coordinate Ca(2+). P139 is a binding site for substrate. An N-linked (GlcNAc...) asparagine glycan is attached at N147. H169 provides a ligand contact to heme b. T170 provides a ligand contact to Ca(2+). Residues N185, N197, and N211 are each glycosylated (N-linked (GlcNAc...) asparagine). Residues D221, T224, and D229 each contribute to the Ca(2+) site. The N-linked (GlcNAc...) asparagine glycan is linked to N267.

The protein belongs to the peroxidase family. Classical plant (class III) peroxidase subfamily. Requires Ca(2+) as cofactor. Heme b is required as a cofactor.

It carries out the reaction 2 a phenolic donor + H2O2 = 2 a phenolic radical donor + 2 H2O. Functionally, removal of H(2)O(2), oxidation of toxic reductants, biosynthesis and degradation of lignin, suberization, auxin catabolism, response to environmental stresses such as wounding, pathogen attack and oxidative stress. These functions might be dependent on each isozyme/isoform in each plant tissue. The chain is Peroxidase A2 (HRPA2) from Armoracia rusticana (Horseradish).